Here is a 330-residue protein sequence, read N- to C-terminus: Probable allantoicase (330 aa).

It belongs to the allantoicase family.

It catalyses the reaction allantoate + H2O = (S)-ureidoglycolate + urea. Its pathway is nitrogen metabolism; (S)-allantoin degradation; (S)-ureidoglycolate from allantoate (aminidohydrolase route): step 1/1. This is Probable allantoicase from Photobacterium profundum (strain SS9).